Consider the following 416-residue polypeptide: 3-isopropylmalate dehydratase large subunit (416 aa).

[4Fe-4S] cluster is bound by residues C297, C357, and C360.

This sequence belongs to the aconitase/IPM isomerase family. LeuC type 2 subfamily. In terms of assembly, heterodimer of LeuC and LeuD. It depends on [4Fe-4S] cluster as a cofactor.

It carries out the reaction (2R,3S)-3-isopropylmalate = (2S)-2-isopropylmalate. It participates in amino-acid biosynthesis; L-leucine biosynthesis; L-leucine from 3-methyl-2-oxobutanoate: step 2/4. Functionally, catalyzes the isomerization between 2-isopropylmalate and 3-isopropylmalate, via the formation of 2-isopropylmaleate. The protein is 3-isopropylmalate dehydratase large subunit of Methanoregula boonei (strain DSM 21154 / JCM 14090 / 6A8).